A 329-amino-acid chain; its full sequence is Phospholipid scramblase 4 (329 aa).

Residues 1–51 (MSGVVPTAPEQPAGEMENQTKPPDPRPDAPPEYNSHFLPGPPGTAVPPPTG) are disordered. Residues 1-98 (MSGVVPTAPE…PMPNQSVPIT (98 aa)) form a proline-rich domain (PRD) region. Over 1–303 (MSGVVPTAPE…IHFPLDLDVK (303 aa)) the chain is Cytoplasmic. An SH3-binding 1 motif is present at residues 18-25 (NQTKPPDP). Positions 30–33 (PPEY) match the PPxY motif motif. Positions 39–51 (PGPPGTAVPPPTG) are enriched in pro residues. Residues 41 to 49 (PPGTAVPPP) carry the SH3-binding 2 motif. A phosphotyrosine; by ABL mark is found at Tyr83 and Tyr88. The SH3-binding 3 signature appears at 98–106 (TWMPGPTPM). S-palmitoyl cysteine attachment occurs at residues Cys197, Cys198, Cys199, Cys201, and Cys202. A Nuclear localization signal motif is present at residues 271 to 283 (NIGSIIRKWNGLL). A helical membrane pass occupies residues 304-320 (MKAMIFGACFLIDFMYF). Residues 321–329 (ERSPPQRSR) are Extracellular-facing.

The protein belongs to the phospholipid scramblase family. As to quaternary structure, interacts with PDCD6. Interacts with KPNA2; this interaction mediates the nucleus import of PLSCR4. Ca(2+) is required as a cofactor. Requires Mg(2+) as cofactor. The cofactor is Zn(2+). In terms of tissue distribution, expressed in heart, brain, placenta, lung, liver, kidney, pancreas, spleen, thymus, prostate, testis, uterus, small intestine and colon. Not detected in peripheral blood lymphocytes.

It is found in the cell membrane. It localises to the nucleus. It catalyses the reaction a 1,2-diacyl-sn-glycero-3-phosphocholine(in) = a 1,2-diacyl-sn-glycero-3-phosphocholine(out). The enzyme catalyses a 1,2-diacyl-sn-glycero-3-phospho-L-serine(in) = a 1,2-diacyl-sn-glycero-3-phospho-L-serine(out). In terms of biological role, catalyzes metal ion-induced ATP-independent rapid bidirectional and non-specific movement of phospholipids (lipid scrambling or lipid flip-flop) between the inner and outer leaflet of the plasma membrane and participates in the redistribution of phospholipids between membrane leaflets. Metal ions bind to the calcium-binding site and induce conformation change in the protein. Has a greater affi nity for Ca(2+) than Mg(2+) and Zn(2+). The protein is Phospholipid scramblase 4 of Homo sapiens (Human).